Here is a 119-residue protein sequence, read N- to C-terminus: DLTQFGNMINKMGQSVFDYIYYGCYCGWGGQGKPRDATDRCCFVHDCCYGKMGTYDTKWTSYKYEFQDGDIICGDKDPQKKELCECDRVAAICFANSRNTYNSKYFGYSSSKCTETEQC.

Ca(2+)-binding residues include Y25, G27, and G29. H45 is a catalytic residue. Ca(2+) is bound at residue D46. D87 is an active-site residue.

This sequence belongs to the phospholipase A2 family. Group II subfamily. D49 sub-subfamily. Ca(2+) is required as a cofactor. Post-translationally, contains 6 disulfide bonds. In terms of tissue distribution, expressed by the venom gland.

It localises to the secreted. The enzyme catalyses a 1,2-diacyl-sn-glycero-3-phosphocholine + H2O = a 1-acyl-sn-glycero-3-phosphocholine + a fatty acid + H(+). In terms of biological role, PLA2 catalyzes the calcium-dependent hydrolysis of the 2-acyl groups in 3-sn-phosphoglycerides. The sequence is that of Acidic phospholipase A2 CM-II from Bitis nasicornis (Rhinoceros adder).